Reading from the N-terminus, the 361-residue chain is dTDP-glucose 4,6-dehydratase 1 (361 aa).

NAD(+) is bound by residues 11-12, 32-35, 58-59, 80-84, and Thr99; these read FI, DKLT, DI, and LAAES. Substrate is bound at residue Ser84. Thr133 is a substrate binding site. The active-site Proton donor is Asp134. Catalysis depends on proton acceptor residues Glu135 and Tyr167. Position 167–171 (167–171) interacts with NAD(+); that stretch reads YSASK. Asn196 provides a ligand contact to substrate. Asn197 serves as a coordination point for NAD(+). Residues 206 to 207, 222 to 224, Arg231, Asn266, and 296 to 300 contribute to the substrate site; these read KL, PIY, and DRPGH.

This sequence belongs to the NAD(P)-dependent epimerase/dehydratase family. dTDP-glucose dehydratase subfamily. In terms of assembly, homodimer. Requires NAD(+) as cofactor.

It catalyses the reaction dTDP-alpha-D-glucose = dTDP-4-dehydro-6-deoxy-alpha-D-glucose + H2O. It participates in carbohydrate biosynthesis; dTDP-L-rhamnose biosynthesis. It functions in the pathway bacterial outer membrane biogenesis; LPS O-antigen biosynthesis. Functionally, catalyzes the dehydration of dTDP-D-glucose to form dTDP-6-deoxy-D-xylo-4-hexulose via a three-step process involving oxidation, dehydration and reduction. This chain is dTDP-glucose 4,6-dehydratase 1 (rfbB), found in Escherichia coli (strain K12).